Here is a 632-residue protein sequence, read N- to C-terminus: Biosynthetic arginine decarboxylase (632 aa).

The residue at position 101 (Lys101) is an N6-(pyridoxal phosphate)lysine. 281–291 (FDVGGGLGVDY) serves as a coordination point for substrate.

The protein belongs to the Orn/Lys/Arg decarboxylase class-II family. SpeA subfamily. The cofactor is Mg(2+). It depends on pyridoxal 5'-phosphate as a cofactor.

The catalysed reaction is L-arginine + H(+) = agmatine + CO2. It functions in the pathway amine and polyamine biosynthesis; agmatine biosynthesis; agmatine from L-arginine: step 1/1. Its function is as follows. Catalyzes the biosynthesis of agmatine from arginine. The polypeptide is Biosynthetic arginine decarboxylase (Salmonella agona (strain SL483)).